We begin with the raw amino-acid sequence, 199 residues long: 3-hexulose-6-phosphate isomerase (199 aa).

One can recognise an SIS domain in the interval 44–186 (LARQIVQPGR…FQSLWDHTEV (143 aa)). Residues S62 and 101–106 (SGSGTT) each bind substrate. Residue E166 is the Proton acceptor of the active site.

It belongs to the SIS family. PHI subfamily.

It catalyses the reaction D-arabino-hex-3-ulose 6-phosphate = beta-D-fructose 6-phosphate. Its pathway is one-carbon metabolism; formaldehyde assimilation via RuMP pathway; D-fructose 6-phosphate from D-ribulose 5-phosphate and formaldehyde: step 2/2. Its function is as follows. Catalyzes the isomerization between 3-hexulose 6-phosphate and fructose 6-phosphate. The polypeptide is 3-hexulose-6-phosphate isomerase (rmpB) (Mycobacterium gastri).